The chain runs to 308 residues: MGRQGNLEELWCLRMPEIITPIITPFTKDNRIDKEKLKIHAENLIRKGIDKLFVNGTTGLGPSLSPEEKLENLKAVYDVTNKIIFQVGGLNLDDAIRLAKLSKDFDIVGIASYAPYYYPRMSEKHLVKYFKTLCEVSPHPVYLYNYPTATGKDIDAKVAKEIGCFTGVKDTIENIIHTLDYKRLNPNMLVYSGSDMLIATVASTGLDGNVAAGSNYLPEVTVTIKKLAMERKIDEALKLQFLHDEVIEASRIFGSLSSNYVLTKYFQGYDLGYPRPPIFPLDDEEERQLIKKVEGIRAKLVELKILKE.

Residues 57 to 58 (TT), 144 to 146 (YNY), and 169 to 171 (KDT) each bind substrate. Lys-169 acts as the Schiff-base intermediate with substrate in catalysis.

The protein belongs to the DapA family. KDPG aldolase subfamily. Homotetramer; dimer of dimers.

It catalyses the reaction 2-dehydro-3-deoxy-6-phospho-D-gluconate = D-glyceraldehyde 3-phosphate + pyruvate. The catalysed reaction is 2-dehydro-3-deoxy-6-phospho-D-galactonate = D-glyceraldehyde 3-phosphate + pyruvate. It functions in the pathway carbohydrate acid metabolism; 2-dehydro-3-deoxy-D-gluconate degradation; D-glyceraldehyde 3-phosphate and pyruvate from 2-dehydro-3-deoxy-D-gluconate: step 2/2. Involved in the degradation of glucose and galactose via the Entner-Doudoroff pathway. Catalyzes the reversible cleavage of 2-keto-3-deoxy-6-phosphogluconate (KDPG) and 2-keto-3-deoxygluconate (KDG) forming pyruvate and glyceraldehyde 3-phosphate or glyceraldehyde, respectively. It is also able to catalyze the reversible cleavage of 2-keto-3-deoxy-6-phosphogalactonate (KDPGal) and 2-keto-3-deoxygalactonate (KDGal). This Saccharolobus solfataricus (strain ATCC 35092 / DSM 1617 / JCM 11322 / P2) (Sulfolobus solfataricus) protein is 2-dehydro-3-deoxy-phosphogluconate/2-dehydro-3-deoxy-6-phosphogalactonate aldolase (eda).